We begin with the raw amino-acid sequence, 125 residues long: Large ribosomal subunit protein uL22c (125 aa).

Belongs to the universal ribosomal protein uL22 family. As to quaternary structure, part of the 50S ribosomal subunit.

It localises to the plastid. The protein localises to the chloroplast. Functionally, this protein binds specifically to 23S rRNA. The globular domain of the protein is located near the polypeptide exit tunnel on the outside of the subunit, while an extended beta-hairpin is found that lines the wall of the exit tunnel in the center of the 70S ribosome. This Huperzia lucidula (Shining clubmoss) protein is Large ribosomal subunit protein uL22c (rpl22).